A 305-amino-acid polypeptide reads, in one-letter code: Tyrosine recombinase XerC (305 aa).

Residues 4–95 enclose the Core-binding (CB) domain; the sequence is TSIQELINKW…AVKNFYKFLE (92 aa). The region spanning 116-298 is the Tyr recombinase domain; that stretch reads LLPKSLSEDD…SIKHLVSVYT (183 aa). Residues Arg159, Lys182, His250, Arg253, and His276 contribute to the active site. Catalysis depends on Tyr285, which acts as the O-(3'-phospho-DNA)-tyrosine intermediate.

The protein belongs to the 'phage' integrase family. XerC subfamily. As to quaternary structure, forms a cyclic heterotetrameric complex composed of two molecules of XerC and two molecules of XerD.

It localises to the cytoplasm. Site-specific tyrosine recombinase, which acts by catalyzing the cutting and rejoining of the recombining DNA molecules. The XerC-XerD complex is essential to convert dimers of the bacterial chromosome into monomers to permit their segregation at cell division. It also contributes to the segregational stability of plasmids. The sequence is that of Tyrosine recombinase XerC from Rickettsia canadensis (strain McKiel).